The chain runs to 156 residues: Snaclec rhinocetin subunit alpha (156 aa).

A signal peptide spans 1-23 (MGRFIFLSSGWLVVFLSLSGTGA). Disulfide bonds link cysteine 27/cysteine 38, cysteine 55/cysteine 150, and cysteine 125/cysteine 142. Residues 34–151 (YEGHCYKFFF…CGDNYPFVCM (118 aa)) form the C-type lectin domain.

This sequence belongs to the snaclec family. As to quaternary structure, heterodimer; disulfide-linked. Expressed by the venom gland.

It localises to the secreted. Functionally, antagonist of the alpha-2 subunit of the integrin alpha-2/beta-1 (ITGA2/ITGB1) on human platelets and endothelial cells. This protein inhibits collagen-stimulated activation of human platelets in a dose-dependent manner. In addition, it antagonizes the binding of monoclonal antibodies against the alpha-2 subunit of integrin alpha-2/beta-1 to platelets and it coimmunoprecipitates with this integrin. This chain is Snaclec rhinocetin subunit alpha, found in Bitis rhinoceros (West African gaboon viper).